The primary structure comprises 313 residues: Porphobilinogen deaminase (313 aa).

Position 242 is an S-(dipyrrolylmethanemethyl)cysteine (cysteine 242).

The protein belongs to the HMBS family. In terms of assembly, monomer. It depends on dipyrromethane as a cofactor.

The catalysed reaction is 4 porphobilinogen + H2O = hydroxymethylbilane + 4 NH4(+). It participates in porphyrin-containing compound metabolism; protoporphyrin-IX biosynthesis; coproporphyrinogen-III from 5-aminolevulinate: step 2/4. Functionally, tetrapolymerization of the monopyrrole PBG into the hydroxymethylbilane pre-uroporphyrinogen in several discrete steps. This is Porphobilinogen deaminase from Salmonella dublin (strain CT_02021853).